The sequence spans 160 residues: Nucleotide-binding protein VSAL_I1728 (160 aa).

Belongs to the YajQ family.

Its function is as follows. Nucleotide-binding protein. The sequence is that of Nucleotide-binding protein VSAL_I1728 from Aliivibrio salmonicida (strain LFI1238) (Vibrio salmonicida (strain LFI1238)).